The sequence spans 343 residues: Tumor necrosis factor receptor superfamily member wgn (343 aa).

2 disordered regions span residues 1-44 (MMPP…IGGS) and 74-96 (SSAA…SIAS). Positions 1–76 (MMPPRLPGGH…ATSASSSSSA (76 aa)) are cleaved as a signal peptide. The span at 13–24 (AMRSRSSSSGHH) shows a compositional bias: low complexity. Residues 29 to 39 (FHKRRRRRQQH) are compositionally biased toward basic residues. Over 77 to 201 (ANTDIAPPDP…AAWVLDWQTG (125 aa)) the chain is Extracellular. Residues 99 to 137 (PCAPQHWWDSQRDRCTPCTRCQGEMIPLRPCQLHTDTIC) form a TNFR-Cys repeat. 3 disulfide bridges follow: C100–C113, C116–C129, and C119–C137. The chain crosses the membrane as a helical span at residues 202-222 (VLYVAVLTCLVFFSVAACILI). The Cytoplasmic segment spans residues 223–343 (HHMRQWRRME…GVRGCSGLKG (121 aa)). Residues 225-257 (MRQWRRMERRLDQDVEELSTKLMAKLAEVQSLD) are a coiled coil.

In terms of assembly, monomer. Interacts (via extracellular cystein-rich domain) with egr (via secreted TNF-homology soluble form); forms heterohexamers when 3 copies associate with egr trimers. Interacts with Traf6. Interacts with Moe. In terms of tissue distribution, expressed in the adult midgut; under normal conditions expressed at higher levels than the other TNF receptor grnd.

Its subcellular location is the cell membrane. It localises to the cytoplasmic vesicle membrane. In terms of biological role, receptor for egr. Involved in induction of apoptosis by triggering JNK signaling. Mediates the tumor suppressor activity of egr which eliminates oncogenic cells from epithelia, thereby maintaining epithelial integrity. Following UV-induced epidermal damage, binds to egr released from apoptotic epidermal cells and plays a role in development of thermal allodynia, a responsiveness to subthreshold thermal stimuli which are not normally perceived as noxious. Together with Moe, involved in control of axon targeting of R8 and R2-R5 photoreceptors, independent of egr. The polypeptide is Tumor necrosis factor receptor superfamily member wgn (Drosophila melanogaster (Fruit fly)).